Reading from the N-terminus, the 105-residue chain is Large ribosomal subunit protein uL24 (105 aa).

The protein belongs to the universal ribosomal protein uL24 family. In terms of assembly, part of the 50S ribosomal subunit.

One of two assembly initiator proteins, it binds directly to the 5'-end of the 23S rRNA, where it nucleates assembly of the 50S subunit. Functionally, one of the proteins that surrounds the polypeptide exit tunnel on the outside of the subunit. The polypeptide is Large ribosomal subunit protein uL24 (Nitrosospira multiformis (strain ATCC 25196 / NCIMB 11849 / C 71)).